Here is a 122-residue protein sequence, read N- to C-terminus: Histone H2B.2 (122 aa).

Residues 1-10 show a composition bias toward low complexity; sequence MAPKKAPAAT. Residues 1–28 form a disordered region; that stretch reads MAPKKAPAATTEKKVKKAPTTEKKNKKK. Alanine 2 is subject to N,N,N-trimethylalanine. N6-acetyllysine occurs at positions 5 and 42. Lysine 116 participates in a covalent cross-link: Glycyl lysine isopeptide (Lys-Gly) (interchain with G-Cter in ubiquitin).

Belongs to the histone H2B family. As to quaternary structure, the nucleosome is a histone octamer containing two molecules each of H2A, H2B, H3 and H4 assembled in one H3-H4 heterotetramer and two H2A-H2B heterodimers. The octamer wraps approximately 147 bp of DNA. Post-translationally, acetylation occurs almost exclusively in the MAC. Monoubiquitination to form H2BK115ub1 gives a specific tag for epigenetic transcriptional activation and is also prerequisite for H3K4me and H3K79me formation.

It localises to the nucleus. The protein localises to the chromosome. Core component of nucleosome. Nucleosomes wrap and compact DNA into chromatin, limiting DNA accessibility to the cellular machineries which require DNA as a template. Histones thereby play a central role in transcription regulation, DNA repair, DNA replication and chromosomal stability. DNA accessibility is regulated via a complex set of post-translational modifications of histones, also called histone code, and nucleosome remodeling. In Tetrahymena thermophila (strain SB210), this protein is Histone H2B.2 (HTB2).